A 641-amino-acid polypeptide reads, in one-letter code: Forkhead box protein P4 (641 aa).

2 disordered regions span residues M1–L43 and S239–S264. Polar residues-rich tracts occupy residues I8–S27 and S239–N259. The C2H2-type zinc finger occupies G278–H303. The interval V320–L341 is leucine-zipper. Positions P354–V358 are ctbp1-binding. Positions R436–L526 form a DNA-binding region, fork-head. Residues S563–P641 form a disordered region. A compositionally biased stretch (polar residues) spans T576 to I599. Basic and acidic residues predominate over residues H600–R611. A compositionally biased stretch (acidic residues) spans R629–P641.

In terms of assembly, dimerization is required for DNA-binding. As to expression, first expressed in the anterior neural field of stage 15 embryos. At stage 18, localized in three domains of the brain (rostral forebrain, midbrain and hindbrain) and in the eye anlage. Cerebral and retinal expression persists at later stages with additional expression in the branchial arches, at the base of the hatching gland, and in the pancreas.

It is found in the nucleus. Functionally, transcriptional repressor. The sequence is that of Forkhead box protein P4 from Xenopus laevis (African clawed frog).